Consider the following 442-residue polypeptide: Trigger factor (442 aa).

In terms of domain architecture, PPIase FKBP-type spans 165-250; it reads DDTAQIDFEG…LHKILQKELP (86 aa).

The protein belongs to the FKBP-type PPIase family. Tig subfamily.

It is found in the cytoplasm. It catalyses the reaction [protein]-peptidylproline (omega=180) = [protein]-peptidylproline (omega=0). Involved in protein export. Acts as a chaperone by maintaining the newly synthesized protein in an open conformation. Functions as a peptidyl-prolyl cis-trans isomerase. In Helicobacter hepaticus (strain ATCC 51449 / 3B1), this protein is Trigger factor.